The chain runs to 473 residues: Siroheme synthase 1 (473 aa).

The precorrin-2 dehydrogenase /sirohydrochlorin ferrochelatase stretch occupies residues 1–204; that stretch reads MDYFPIFCQL…NDHVQADQHV (204 aa). NAD(+) contacts are provided by residues 22 to 23 and 43 to 44; these read EI and CE. Phosphoserine is present on Ser-128. The interval 216-473 is uroporphyrinogen-III C-methyltransferase; the sequence is GEVVLVGAGP…KVTECVAHVG (258 aa). Residue Pro-225 participates in S-adenosyl-L-methionine binding. Catalysis depends on Asp-248, which acts as the Proton acceptor. The active-site Proton donor is the Lys-270. S-adenosyl-L-methionine is bound by residues 301 to 303, Ile-306, 331 to 332, Met-382, and Gly-411; these read GGD and TA.

This sequence in the N-terminal section; belongs to the precorrin-2 dehydrogenase / sirohydrochlorin ferrochelatase family. It in the C-terminal section; belongs to the precorrin methyltransferase family.

The enzyme catalyses uroporphyrinogen III + 2 S-adenosyl-L-methionine = precorrin-2 + 2 S-adenosyl-L-homocysteine + H(+). The catalysed reaction is precorrin-2 + NAD(+) = sirohydrochlorin + NADH + 2 H(+). It carries out the reaction siroheme + 2 H(+) = sirohydrochlorin + Fe(2+). It participates in cofactor biosynthesis; adenosylcobalamin biosynthesis; precorrin-2 from uroporphyrinogen III: step 1/1. It functions in the pathway cofactor biosynthesis; adenosylcobalamin biosynthesis; sirohydrochlorin from precorrin-2: step 1/1. The protein operates within porphyrin-containing compound metabolism; siroheme biosynthesis; precorrin-2 from uroporphyrinogen III: step 1/1. Its pathway is porphyrin-containing compound metabolism; siroheme biosynthesis; siroheme from sirohydrochlorin: step 1/1. It participates in porphyrin-containing compound metabolism; siroheme biosynthesis; sirohydrochlorin from precorrin-2: step 1/1. Multifunctional enzyme that catalyzes the SAM-dependent methylations of uroporphyrinogen III at position C-2 and C-7 to form precorrin-2 via precorrin-1. Then it catalyzes the NAD-dependent ring dehydrogenation of precorrin-2 to yield sirohydrochlorin. Finally, it catalyzes the ferrochelation of sirohydrochlorin to yield siroheme. The sequence is that of Siroheme synthase 1 from Yersinia pestis (strain Pestoides F).